A 518-amino-acid chain; its full sequence is GMP synthase [glutamine-hydrolyzing] (518 aa).

Residues 13-203 (KIIVLDFGSQ…ALNVCGCKGD (191 aa)) form the Glutamine amidotransferase type-1 domain. C90 serves as the catalytic Nucleophile. Active-site residues include H177 and E179. The 190-residue stretch at 204-393 (WTMENFSEVE…LGMPDAIVWR (190 aa)) folds into the GMPS ATP-PPase domain. Residue 231 to 237 (SGGVDSS) coordinates ATP.

As to quaternary structure, homodimer.

It carries out the reaction XMP + L-glutamine + ATP + H2O = GMP + L-glutamate + AMP + diphosphate + 2 H(+). Its pathway is purine metabolism; GMP biosynthesis; GMP from XMP (L-Gln route): step 1/1. In terms of biological role, catalyzes the synthesis of GMP from XMP. The chain is GMP synthase [glutamine-hydrolyzing] from Listeria welshimeri serovar 6b (strain ATCC 35897 / DSM 20650 / CCUG 15529 / CIP 8149 / NCTC 11857 / SLCC 5334 / V8).